A 482-amino-acid chain; its full sequence is Bifunctional protein GlmU (482 aa).

The interval 1–238 is pyrophosphorylase; the sequence is MSATSPAAVV…HREILGINNR (238 aa). Residues 12 to 15, lysine 26, glutamine 79, and 84 to 85 contribute to the UDP-N-acetyl-alpha-D-glucosamine site; these read LAAG and GT. Residue aspartate 110 participates in Mg(2+) binding. Residues glycine 147, glutamate 163, asparagine 178, and asparagine 236 each coordinate UDP-N-acetyl-alpha-D-glucosamine. Asparagine 236 provides a ligand contact to Mg(2+). The linker stretch occupies residues 239-259; the sequence is LQLAEARRLLNERLLERAMLA. The tract at residues 260–482 is N-acetyltransferase; that stretch reads GVTVVDPAST…ASSQETDGQS (223 aa). UDP-N-acetyl-alpha-D-glucosamine contacts are provided by arginine 341 and lysine 359. The Proton acceptor role is filled by histidine 371. Positions 374 and 385 each coordinate UDP-N-acetyl-alpha-D-glucosamine. Residues alanine 388, 394–395, serine 413, alanine 431, and arginine 448 contribute to the acetyl-CoA site; that span reads NY. The interval 458-482 is disordered; sequence VARKRPGSAAAQAAQASSQETDGQS. The segment covering 465–476 has biased composition (low complexity); sequence SAAAQAAQASSQ.

The protein in the N-terminal section; belongs to the N-acetylglucosamine-1-phosphate uridyltransferase family. It in the C-terminal section; belongs to the transferase hexapeptide repeat family. As to quaternary structure, homotrimer. The cofactor is Mg(2+).

Its subcellular location is the cytoplasm. It carries out the reaction alpha-D-glucosamine 1-phosphate + acetyl-CoA = N-acetyl-alpha-D-glucosamine 1-phosphate + CoA + H(+). The enzyme catalyses N-acetyl-alpha-D-glucosamine 1-phosphate + UTP + H(+) = UDP-N-acetyl-alpha-D-glucosamine + diphosphate. The protein operates within nucleotide-sugar biosynthesis; UDP-N-acetyl-alpha-D-glucosamine biosynthesis; N-acetyl-alpha-D-glucosamine 1-phosphate from alpha-D-glucosamine 6-phosphate (route II): step 2/2. Its pathway is nucleotide-sugar biosynthesis; UDP-N-acetyl-alpha-D-glucosamine biosynthesis; UDP-N-acetyl-alpha-D-glucosamine from N-acetyl-alpha-D-glucosamine 1-phosphate: step 1/1. It participates in bacterial outer membrane biogenesis; LPS lipid A biosynthesis. Functionally, catalyzes the last two sequential reactions in the de novo biosynthetic pathway for UDP-N-acetylglucosamine (UDP-GlcNAc). The C-terminal domain catalyzes the transfer of acetyl group from acetyl coenzyme A to glucosamine-1-phosphate (GlcN-1-P) to produce N-acetylglucosamine-1-phosphate (GlcNAc-1-P), which is converted into UDP-GlcNAc by the transfer of uridine 5-monophosphate (from uridine 5-triphosphate), a reaction catalyzed by the N-terminal domain. This chain is Bifunctional protein GlmU, found in Streptomyces griseus subsp. griseus (strain JCM 4626 / CBS 651.72 / NBRC 13350 / KCC S-0626 / ISP 5235).